A 361-amino-acid chain; its full sequence is MALTRLLIKDFRNIESADLALAAGFNFLVGPNGSGKTSVLEAVYTLGHGRAFRSLQAGRVIRHECAEFVLHGRVDANEREASVGLSKSRQGDTKVRIDGTDGHKVAELAQMLPMQLITPEGFTLLNGGPKFRRAFLDWGCFHNEPGFFTAWSNLKRLLKQRNAALRQVSRYTQIRAWDQEIIPLAERISEWRAAYSDAIAADISATCALFLPEFALSFSFQRGWDKESDYGELLERQFERDRALTYTAVGPHKADFRIRADGTPVEDLLSRGQLKLLMCALRLAQGEFLTRQSGRRCLYLLDDFASELDTGRRRLLAERLKATQAQVFVSAVSAEQVADMVGEKGKMFRVEHGKIEVQPQD.

30–37 (GPNGSGKT) is a binding site for ATP.

Belongs to the RecF family.

The protein localises to the cytoplasm. The RecF protein is involved in DNA metabolism; it is required for DNA replication and normal SOS inducibility. RecF binds preferentially to single-stranded, linear DNA. It also seems to bind ATP. The protein is DNA replication and repair protein RecF of Yersinia pseudotuberculosis serotype O:1b (strain IP 31758).